The chain runs to 222 residues: MALSVETESHIYRALRTVSGAAAHLVALGFTIFVAVLARPGSSLFSWHPVLMSLAFSFLMTEALLVFSPESSLLRSLSRKGRARCHWVLQLLALLCALLGLGLVILHKEQLGKAHLATWHGRAGLLAVLWAGLQCSGGVGLLYPKLLPRWPLAKLKLYHATSGLVGYLLGGASLLLGMCSLWFTATVTGGVWYLAVLCPVITSLVIMNQVSNAYLYRKRIQP.

Topologically, residues alanine 2–threonine 17 are cytoplasmic. The Cytochrome b561 domain occupies alanine 14–arginine 217. The chain crosses the membrane as a helical span at residues valine 18–alanine 38. Topologically, residues arginine 39 to serine 46 are lumenal. The helical transmembrane segment at tryptophan 47–phenylalanine 67 threads the bilayer. Residue histidine 48 coordinates heme b. Topologically, residues serine 68 to cysteine 85 are cytoplasmic. Residues histidine 86 and histidine 120 each coordinate heme b. A helical transmembrane segment spans residues histidine 86–leucine 106. At histidine 107–arginine 122 the chain is on the lumenal side. A helical membrane pass occupies residues alanine 123–tyrosine 143. Over proline 144–serine 162 the chain is Cytoplasmic. Residue histidine 159 participates in heme b binding. A helical membrane pass occupies residues glycine 163–phenylalanine 183. Topologically, residues threonine 184–threonine 186 are lumenal. The chain crosses the membrane as a helical span at residues valine 187 to methionine 207. Topologically, residues asparagine 208–proline 222 are cytoplasmic.

Heme b serves as cofactor.

It is found in the endoplasmic reticulum membrane. Its subcellular location is the cytoplasmic vesicle membrane. The enzyme catalyses monodehydro-L-ascorbate radical(out) + L-ascorbate(in) = monodehydro-L-ascorbate radical(in) + L-ascorbate(out). It carries out the reaction Fe(3+)(out) + L-ascorbate(in) = monodehydro-L-ascorbate radical(in) + Fe(2+)(out) + H(+). Transmembrane reductase that may use ascorbate as an electron donor in the cytoplasm and transfer electrons across endoplasmic reticulum membranes to reduce monodehydro-L-ascorbate radical and iron cations Fe(3+) in the lumen of that compartment. This is Transmembrane reductase CYB561D2 from Bos taurus (Bovine).